Consider the following 154-residue polypeptide: Transcription antitermination protein NusB (154 aa).

This sequence belongs to the NusB family.

Functionally, involved in transcription antitermination. Required for transcription of ribosomal RNA (rRNA) genes. Binds specifically to the boxA antiterminator sequence of the ribosomal RNA (rrn) operons. This chain is Transcription antitermination protein NusB, found in Bordetella parapertussis (strain 12822 / ATCC BAA-587 / NCTC 13253).